The primary structure comprises 173 residues: Bifunctional protein PyrR (173 aa).

The PRPP-binding signature appears at 93 to 105 (IILIDDVLYTGRT).

The protein belongs to the purine/pyrimidine phosphoribosyltransferase family. PyrR subfamily. As to quaternary structure, homodimer and homohexamer; in equilibrium.

It catalyses the reaction UMP + diphosphate = 5-phospho-alpha-D-ribose 1-diphosphate + uracil. In terms of biological role, regulates transcriptional attenuation of the pyrimidine nucleotide (pyr) operon by binding in a uridine-dependent manner to specific sites on pyr mRNA. This disrupts an antiterminator hairpin in the RNA and favors formation of a downstream transcription terminator, leading to a reduced expression of downstream genes. Its function is as follows. Also displays a weak uracil phosphoribosyltransferase activity which is not physiologically significant. The protein is Bifunctional protein PyrR of Streptococcus agalactiae serotype Ia (strain ATCC 27591 / A909 / CDC SS700).